The following is a 216-amino-acid chain: Large ribosomal subunit protein uL3 (216 aa).

The segment at 132 to 157 is disordered; the sequence is FRGQGASHGTQAVHRKPGSIGGCATP.

It belongs to the universal ribosomal protein uL3 family. Part of the 50S ribosomal subunit. Forms a cluster with proteins L14 and L19.

Functionally, one of the primary rRNA binding proteins, it binds directly near the 3'-end of the 23S rRNA, where it nucleates assembly of the 50S subunit. The chain is Large ribosomal subunit protein uL3 from Saccharopolyspora erythraea (strain ATCC 11635 / DSM 40517 / JCM 4748 / NBRC 13426 / NCIMB 8594 / NRRL 2338).